The sequence spans 1713 residues: MFNRFNKLQAALALVLYSQSALGQYYTSSSIASNSSTAVSSTSSGSVSISSSIELTSSTSDVSSSLTELTSSFTEVSSSIAPSTSSSEVSSSITSSGSSVSGSSSITSSGSSVSSSSPYDERFNSLDLSVHVSAGFSAGVSVGLEPSATTASVTTTLSPYDERVNLIELGVYVSDMRAHLVEYLLFQAAHSTEPHPTEIAAAFLDHGDFTTRLTGISGDEVTRMITGVPWYSTRLKPAISEALAKDGIYTAIPTSTSTTSDTYISSSSPSQVTSSAEPTTVSGVTSSVEPTRSSQVTSSAEPTTVSEITSSAEPLSSSKATTSAESISSNQITISSELIVSSVITSSSEIPSSIEVLTSSGISSSVEPTSLVGPSSDESISSTESLSATSTPLAVSSTVVTSSTDSVSPNIPFSEISSSPESSTAITSGSSSATESGSSVSGSTSATESGSSASGSSSATESGSSVSGSTSATESGSASSVPSSSGSVTESGSSSSASESSITQSGTASGSSVSSTSGSVTQSGSSVSGSSASSAPGISSSIPQSTSSASTASGSITSGTLTSITSGSSSATESGSSVSGSSSATESGSSVSGSTSATESGSSVSGSTSATESGSSASGSSSATESGSSVSGSTSATESGSSVSGSTSATESGSSASGSSSATESGSASSVPSSSGSVTESGSSSSASESSITQSGTASGSSASSTSGSVTQSGSSVSGSSASSAPGISSSIPQSTSSASTASGSITSGTLTSITSGSSSATESGSSASGSSSATESGSSVSGSTSATESGSSVSGSTSATESGSSASGSSSATESGSSVSGSTSATESGSSASGSSSATESGSASSVPSSSGSVTESGSSSSASESSITQSGTASGSSASSTSGSVTQSGSSVSGSSASSTSGSVTQSGSSVSGSSASSAPGISSSIPQSTSSASTASGSITSGTLTSITSSASSASATASNSLSSSDGTIYLPTTTISGDLTLTGKVIATEGVVVAAGAKLTLLDGDKYSFSADLKVYGDLLVKKSKETYPGTEFDISGENFDVTGNFNAEESAATSASIYSFTPSSFDNSGDISLSLSKSKKGEVTFSPYSNSGAFSFSNAILNGGSVSGLQRRDDTEGSVNNGEINLDNGSTYVIVEPVSGKGTVNIISGNLYLHYPDTFTGQTVVFKGEGVLAVDPTESNTTPIPVVGYTGENQIAITADVTALSYDSATGVLTATQGNSQFSFSIGTGFSSSGFNVSEGTFAGAYAYYLNYGGVVASSATPSSTSTTSGATNSTSGSTSFGASVTGSTASTSFGASVTGSTASTLISGSPSVYTTTLTYATTTSTVVVSCSETTDSNGNVYTITTTVPCSSTTATITSCDETGCHVTTSTGTVATETVSSKSYTTVTVTHCDNNGCNTKTVTSEAPEATTTTVSPKTYTTATVTQCDDNGCSTKTVTSECPEETSATTTSPKSYTTVTVTHCDDNGCNTKTVTSEAPEATTTTVSPKTYTTATVTQCDDNGCSTKTVTSECPEETSATTTSPKSYTTVTVTHCDDNGCNTKTVTSEAPEATTTTVSPKTYTTATVTQCDDNGCSTKTVTSEAPKETSETSETSAAPKTYTTATVTQCDDNGCNVKIITSQIPEATSTVTATSASPKSYTTVTSEGSKATSLTTAISKASSAISTYSKSAAPIKTSTGIIVQSEGIAAGLNANTLNALVGIFVLAFFN.

The N-terminal stretch at methionine 1–glycine 23 is a signal peptide. N-linked (GlcNAc...) asparagine glycosylation occurs at asparagine 34. Disordered regions lie at residues isoleucine 80–serine 117, threonine 256–isoleucine 327, and serine 359–serine 939. A compositionally biased stretch (low complexity) spans threonine 256–serine 275. Composition is skewed to polar residues over residues alanine 276–isoleucine 327 and serine 359–proline 368. The span at proline 374 to serine 939 shows a compositional bias: low complexity. N-linked (GlcNAc...) asparagine glycans are attached at residues asparagine 1133, asparagine 1241, and asparagine 1278. Residues lysine 1582–lysine 1603 are disordered. Alanine 1692 is lipidated: GPI-anchor amidated alanine. A propeptide spans alanine 1693–asparagine 1713 (removed in mature form).

This sequence belongs to the SRP1/TIP1 family. The GPI-anchor is attached to the protein in the endoplasmic reticulum and serves to target the protein to the cell surface. There, the glucosamine-inositol phospholipid moiety is cleaved off and the GPI-modified mannoprotein is covalently attached via its lipidless GPI glycan remnant to the 1,6-beta-glucan of the outer cell wall layer.

It localises to the secreted. It is found in the cell wall. The protein localises to the membrane. Its function is as follows. Involved in cell wall organization and biosynthesis. Confers cell surface hydrophobicity (CSH). This Saccharomyces cerevisiae (strain Kyokai no. 7 / NBRC 101557) (Baker's yeast) protein is Cell wall protein AWA1 (AWA1).